The sequence spans 426 residues: MSKSARGWSDGFDPVYPYDADNDRPCPSSTLPSFSSDGFQEKPLGVLSLGPGRPCHTKNGEITLKLGEGVDLDDSGKLIANTVNKAIAPLSFFQQHHFPLTWIPLYTPKMENYPYKFLPPLSILKSTILNTLVSAFGSGLGLSGSALAVQLASPLTFDDKGNIKITLNRGLHVTTGDAIESNISWAKGIKFEDGAIATNIGKGSRFGTSSTETGVNNAYPIQVKLGSGLSFDSTGAIMAGNKDYDKLTLWTTPDPSPNCQILAENDAKLTLCLTMCDSQILATVSVLVVRSGNLNPITGTVSSAQVFLRFDANGVLLTEHSTSKKYWGYKQGDSIDGTPYTNAVGFMPNSTAYPKTQSSTTKNNIVGQVYMNGDVSKPMLLTITLNGTDDTTSAYSMSFSYTWTNGSYIGATFGANSYTFSYIAQQ.

It belongs to the adenoviridae fiber family. Homotrimer. Interacts with host receptor CXCAR. Interacts (via N-terminal tail region) with pentons.

Its subcellular location is the virion. The protein resides in the host nucleus. Forms spikes that protrude from each vertex of the icosahedral capsid. Interacts with host receptor CXCAR to provide virion initial attachment to target cell. Fiber proteins are shed during virus entry, when virus is still at the cell surface. The protein is Fiber protein of Human adenovirus E serotype 4 (HAdV-4).